Reading from the N-terminus, the 119-residue chain is Large ribosomal subunit protein uL18 (119 aa).

The protein belongs to the universal ribosomal protein uL18 family. As to quaternary structure, part of the 50S ribosomal subunit; part of the 5S rRNA/L5/L18/L25 subcomplex. Contacts the 5S and 23S rRNAs.

This is one of the proteins that bind and probably mediate the attachment of the 5S RNA into the large ribosomal subunit, where it forms part of the central protuberance. This chain is Large ribosomal subunit protein uL18, found in Staphylococcus aureus (strain Mu3 / ATCC 700698).